Here is a 2936-residue protein sequence, read N- to C-terminus: Neurobeachin (2936 aa).

A disordered region spans residues 961 to 985; the sequence is ENIKKGKKGNVSTISGLSSQTAGAK. A compositionally biased stretch (polar residues) spans 970–982; that stretch reads NVSTISGLSSQTA. A phosphoserine mark is found at S1001 and S1004. 2 stretches are compositionally biased toward polar residues: residues 1203–1220 and 1231–1241; these read TSDGVSSVSERELASSTK and TLETESSNSKA. Disordered stretches follow at residues 1203 to 1222, 1231 to 1265, and 1270 to 1289; these read TSDGVSSVSERELASSTKGL, TLETESSNSKAVPNVDAGSIISDTERSDDGKESGK, and IQTTATTQAVQGRSSTQQDR. Residues 1253–1265 show a composition bias toward basic and acidic residues; it reads DTERSDDGKESGK. Over residues 1270–1286 the composition is skewed to polar residues; the sequence is IQTTATTQAVQGRSSTQ. One copy of the WD 1 repeat lies at 1316–1358; it reads TTMFRIPEFKWSPMHQRLLTDLLFALETDVHVWRSHSTKSVMD. 4 disordered regions span residues 1480 to 1521, 1639 to 1667, 1701 to 1721, and 1830 to 1850; these read QRDR…LSPI, PDTVKEKETPTPGEDIQLESSVPHTDSGM, VKKSQESLTEHPSEMLKPAPS, and TGAVDSGSSSSSSSSSFVNGA. A Phosphoserine modification is found at S1519. Over residues 1701–1714 the composition is skewed to basic and acidic residues; sequence VKKSQESLTEHPSE. A phosphoserine mark is found at S1704 and S1707. Residues 1835 to 1845 are compositionally biased toward low complexity; it reads SGSSSSSSSSS. Position 2128 is a phosphoserine (S2128). The BEACH-type PH domain occupies 2137–2245; that stretch reads NLAGPVVLST…TVKKVVYSLP (109 aa). The BEACH domain occupies 2264-2553; that stretch reads ATPRQLYKSS…QLLIEPHPPR (290 aa). At S2565 the chain carries Phosphoserine. 4 WD repeats span residues 2708 to 2751, 2768 to 2808, 2850 to 2889, and 2892 to 2931; these read GHWD…HIIG, GHDH…RALE, EINDSTRAILLSSDGQNLVTGGDNGVVEVWQACDFKQLYI, and GCDAGIRAMDLSHDQRTLITGMASGSIVAFNIDFNRWHYE.

Belongs to the WD repeat neurobeachin family. As to quaternary structure, interacts with RII subunit of PKA. As to expression, forebrain, brainstem and cerebellum.

It is found in the membrane. The protein resides in the endomembrane system. Its subcellular location is the postsynaptic cell membrane. In terms of biological role, binds to type II regulatory subunits of protein kinase A and anchors/targets them to the membrane. May anchor the kinase to cytoskeletal and/or organelle-associated proteins. May have a role in membrane trafficking. The chain is Neurobeachin (Nbea) from Mus musculus (Mouse).